The chain runs to 321 residues: uncharacterized protein (321 aa).

This is an uncharacterized protein from Acanthamoeba polyphaga mimivirus (APMV).